The primary structure comprises 494 residues: Guanosine-5'-triphosphate,3'-diphosphate pyrophosphatase (494 aa).

This sequence belongs to the GppA/Ppx family. GppA subfamily.

The catalysed reaction is guanosine 3'-diphosphate 5'-triphosphate + H2O = guanosine 3',5'-bis(diphosphate) + phosphate + H(+). Its pathway is purine metabolism; ppGpp biosynthesis; ppGpp from GTP: step 2/2. Its function is as follows. Catalyzes the conversion of pppGpp to ppGpp. Guanosine pentaphosphate (pppGpp) is a cytoplasmic signaling molecule which together with ppGpp controls the 'stringent response', an adaptive process that allows bacteria to respond to amino acid starvation, resulting in the coordinated regulation of numerous cellular activities. This Shigella flexneri protein is Guanosine-5'-triphosphate,3'-diphosphate pyrophosphatase.